Here is a 369-residue protein sequence, read N- to C-terminus: S-(hydroxymethyl)glutathione dehydrogenase (369 aa).

Zn(2+)-binding residues include cysteine 40, histidine 62, cysteine 92, cysteine 95, cysteine 98, cysteine 106, and cysteine 169.

Belongs to the zinc-containing alcohol dehydrogenase family. Class-III subfamily. As to quaternary structure, homodimer. Zn(2+) serves as cofactor.

Its subcellular location is the cytoplasm. The catalysed reaction is S-(hydroxymethyl)glutathione + NADP(+) = S-formylglutathione + NADPH + H(+). It carries out the reaction S-(hydroxymethyl)glutathione + NAD(+) = S-formylglutathione + NADH + H(+). The enzyme catalyses a primary alcohol + NAD(+) = an aldehyde + NADH + H(+). It catalyses the reaction a secondary alcohol + NAD(+) = a ketone + NADH + H(+). The catalysed reaction is S-nitrosoglutathione + NADH + H(+) = S-(hydroxysulfenamide)glutathione + NAD(+). Has high formaldehyde dehydrogenase activity in the presence of glutathione and catalyzes the oxidation of normal alcohols in a reaction that is not GSH-dependent. In addition, hemithiolacetals other than those formed from GSH, including omega-thiol fatty acids, also are substrates. Also acts as a S-nitroso-glutathione reductase by catalyzing the NADH-dependent reduction of S-nitrosoglutathione. The sequence is that of S-(hydroxymethyl)glutathione dehydrogenase (frmA) from Synechocystis sp. (strain ATCC 27184 / PCC 6803 / Kazusa).